The chain runs to 360 residues: UDP-3-O-acylglucosamine N-acyltransferase (360 aa).

Catalysis depends on His-256, which acts as the Proton acceptor. The disordered stretch occupies residues 341 to 360 (EGSGAETAARPDDDRDEGRG). Residues 349–360 (ARPDDDRDEGRG) are compositionally biased toward basic and acidic residues.

Belongs to the transferase hexapeptide repeat family. LpxD subfamily. Homotrimer.

The catalysed reaction is a UDP-3-O-[(3R)-3-hydroxyacyl]-alpha-D-glucosamine + a (3R)-hydroxyacyl-[ACP] = a UDP-2-N,3-O-bis[(3R)-3-hydroxyacyl]-alpha-D-glucosamine + holo-[ACP] + H(+). The protein operates within bacterial outer membrane biogenesis; LPS lipid A biosynthesis. Functionally, catalyzes the N-acylation of UDP-3-O-acylglucosamine using 3-hydroxyacyl-ACP as the acyl donor. Is involved in the biosynthesis of lipid A, a phosphorylated glycolipid that anchors the lipopolysaccharide to the outer membrane of the cell. The polypeptide is UDP-3-O-acylglucosamine N-acyltransferase (Rhodopseudomonas palustris (strain ATCC BAA-98 / CGA009)).